The following is a 160-amino-acid chain: Large ribosomal subunit protein uL16 (160 aa).

Residues 138–160 (KNLENSSQENTKDSKKSQEEVKQ) form a disordered region. Basic and acidic residues predominate over residues 147–160 (NTKDSKKSQEEVKQ).

It belongs to the universal ribosomal protein uL16 family. In terms of assembly, part of the 50S ribosomal subunit.

Its function is as follows. Binds 23S rRNA and is also seen to make contacts with the A and possibly P site tRNAs. This chain is Large ribosomal subunit protein uL16, found in Prochlorococcus marinus (strain AS9601).